The primary structure comprises 188 residues: Elongation factor P (188 aa).

This sequence belongs to the elongation factor P family.

The protein localises to the cytoplasm. It participates in protein biosynthesis; polypeptide chain elongation. Its function is as follows. Involved in peptide bond synthesis. Stimulates efficient translation and peptide-bond synthesis on native or reconstituted 70S ribosomes in vitro. Probably functions indirectly by altering the affinity of the ribosome for aminoacyl-tRNA, thus increasing their reactivity as acceptors for peptidyl transferase. The protein is Elongation factor P of Flavobacterium johnsoniae (strain ATCC 17061 / DSM 2064 / JCM 8514 / BCRC 14874 / CCUG 350202 / NBRC 14942 / NCIMB 11054 / UW101) (Cytophaga johnsonae).